The sequence spans 52 residues: Insulin-2 (52 aa).

Intrachain disulfides connect C7–C38, C19–C51, and C37–C42.

Belongs to the insulin family. Heterodimer of a B chain and an A chain linked by two disulfide bonds.

The protein resides in the secreted. Functionally, insulin decreases blood glucose concentration. It increases cell permeability to monosaccharides, amino acids and fatty acids. It accelerates glycolysis, the pentose phosphate cycle, and glycogen synthesis in liver. The sequence is that of Insulin-2 from Huso dauricus (Kaluga sturgeon).